We begin with the raw amino-acid sequence, 423 residues long: D-tagatose-1,6-bisphosphate aldolase subunit GatZ (423 aa).

The protein belongs to the GatZ/KbaZ family. GatZ subfamily. Forms a complex with GatY.

Its pathway is carbohydrate metabolism; D-tagatose 6-phosphate degradation; D-glyceraldehyde 3-phosphate and glycerone phosphate from D-tagatose 6-phosphate: step 2/2. Functionally, component of the tagatose-1,6-bisphosphate aldolase GatYZ that is required for full activity and stability of the Y subunit. Could have a chaperone-like function for the proper and stable folding of GatY. When expressed alone, GatZ does not show any aldolase activity. Is involved in the catabolism of galactitol. The protein is D-tagatose-1,6-bisphosphate aldolase subunit GatZ of Salmonella heidelberg (strain SL476).